Here is a 118-residue protein sequence, read N- to C-terminus: Large ribosomal subunit protein bL20 (118 aa).

It belongs to the bacterial ribosomal protein bL20 family.

In terms of biological role, binds directly to 23S ribosomal RNA and is necessary for the in vitro assembly process of the 50S ribosomal subunit. It is not involved in the protein synthesizing functions of that subunit. The sequence is that of Large ribosomal subunit protein bL20 from Pelagibacter ubique (strain HTCC1062).